The primary structure comprises 161 residues: MSGDGSPEIEVDGSGLRVAVVAARWHAETMDGLLAGARRALEASGVTEVTEVRVPGAFELPVAAARLARAGHDAVVALGVVIRGGTPHFDYVCDAATQGLTQVAVTTGVPIGFGVLTVDNEAQALHRAGLRGSREDKGAEAVLAALETVVALRGVAPLPQG.

Residues Trp-25, 57–59 (AFE), and 80–82 (VVI) each bind 5-amino-6-(D-ribitylamino)uracil. 85–86 (GT) contributes to the (2S)-2-hydroxy-3-oxobutyl phosphate binding site. Catalysis depends on His-88, which acts as the Proton donor. Phe-113 is a binding site for 5-amino-6-(D-ribitylamino)uracil. Arg-127 is a binding site for (2S)-2-hydroxy-3-oxobutyl phosphate.

The protein belongs to the DMRL synthase family.

It carries out the reaction (2S)-2-hydroxy-3-oxobutyl phosphate + 5-amino-6-(D-ribitylamino)uracil = 6,7-dimethyl-8-(1-D-ribityl)lumazine + phosphate + 2 H2O + H(+). The protein operates within cofactor biosynthesis; riboflavin biosynthesis; riboflavin from 2-hydroxy-3-oxobutyl phosphate and 5-amino-6-(D-ribitylamino)uracil: step 1/2. Its function is as follows. Catalyzes the formation of 6,7-dimethyl-8-ribityllumazine by condensation of 5-amino-6-(D-ribitylamino)uracil with 3,4-dihydroxy-2-butanone 4-phosphate. This is the penultimate step in the biosynthesis of riboflavin. The sequence is that of 6,7-dimethyl-8-ribityllumazine synthase from Kineococcus radiotolerans (strain ATCC BAA-149 / DSM 14245 / SRS30216).